The sequence spans 353 residues: Purine nucleoside phosphorylase (353 aa).

Residues 1–16 (MSKFSYLQNGKASTNG) are compositionally biased toward polar residues. The tract at residues 1-42 (MSKFSYLQNGKASTNGVPHANGHHQQHQNGHSNGVARNGGTA) is disordered. Phosphate-binding positions include S98, H129, 149–151 (RFH), and A181. Residue E266 participates in a purine D-ribonucleoside binding. S285 contributes to the phosphate binding site. Position 308 (N308) interacts with a purine D-ribonucleoside.

The protein belongs to the PNP/MTAP phosphorylase family. Homotrimer.

It carries out the reaction inosine + phosphate = alpha-D-ribose 1-phosphate + hypoxanthine. The catalysed reaction is guanosine + phosphate = alpha-D-ribose 1-phosphate + guanine. The enzyme catalyses 2'-deoxyguanosine + phosphate = 2-deoxy-alpha-D-ribose 1-phosphate + guanine. It catalyses the reaction 2'-deoxyinosine + phosphate = 2-deoxy-alpha-D-ribose 1-phosphate + hypoxanthine. It participates in purine metabolism; purine nucleoside salvage. With respect to regulation, inhibited by 5'-deaza-1'-aza-2c-deoxy-1'-(9-methylene) immucillin-H (DADMe-ImmH). As part of the purine salvage pathway, catalyzes the phosphorolytic breakdown of the N-glycosidic bond in the beta-(deoxy)ribonucleoside molecules, with the formation of the corresponding free purine bases and pentose-1-phosphate. Preferentially acts on 2'-deoxyinosine and inosine, and to a lesser extent on 2'-deoxyguanosine and guanosine. Has no activity towards adenosine or 2'-deoxyadenosine. In Anopheles gambiae (African malaria mosquito), this protein is Purine nucleoside phosphorylase.